Reading from the N-terminus, the 100-residue chain is Urease subunit gamma (100 aa).

This sequence belongs to the urease gamma subunit family. Heterotrimer of UreA (gamma), UreB (beta) and UreC (alpha) subunits. Three heterotrimers associate to form the active enzyme.

It is found in the cytoplasm. It catalyses the reaction urea + 2 H2O + H(+) = hydrogencarbonate + 2 NH4(+). The protein operates within nitrogen metabolism; urea degradation; CO(2) and NH(3) from urea (urease route): step 1/1. This Streptomyces avermitilis (strain ATCC 31267 / DSM 46492 / JCM 5070 / NBRC 14893 / NCIMB 12804 / NRRL 8165 / MA-4680) protein is Urease subunit gamma.